The sequence spans 348 residues: Dihydroorotase (348 aa).

Positions 17 and 19 each coordinate Zn(2+). Substrate contacts are provided by residues 19–21 (HLR) and N45. Zn(2+)-binding residues include K103, H140, and H178. K103 is modified (N6-carboxylysine). H140 provides a ligand contact to substrate. L223 provides a ligand contact to substrate. D251 provides a ligand contact to Zn(2+). D251 is a catalytic residue. Residues H255 and A267 each contribute to the substrate site.

This sequence belongs to the metallo-dependent hydrolases superfamily. DHOase family. Class II DHOase subfamily. As to quaternary structure, homodimer. Requires Zn(2+) as cofactor.

The enzyme catalyses (S)-dihydroorotate + H2O = N-carbamoyl-L-aspartate + H(+). Its pathway is pyrimidine metabolism; UMP biosynthesis via de novo pathway; (S)-dihydroorotate from bicarbonate: step 3/3. Catalyzes the reversible cyclization of carbamoyl aspartate to dihydroorotate. The protein is Dihydroorotase of Escherichia coli (strain SMS-3-5 / SECEC).